The chain runs to 322 residues: Mitochondrial uncoupling protein 4 (322 aa).

Solcar repeat units lie at residues 20–114 (SKFL…LREV), 124–216 (YPLW…VKHY), and 225–316 (DNIS…IREM). The next 6 helical transmembrane spans lie at 22–39 (FLLSGCAATVAELATFPL), 87–108 (WQGVTPAIYRHVVYSGGRMVTY), 126–143 (LWKSVIGGMMAGVIGQFL), 194–211 (PNIQRAALVNMGDLTTYD), 228–247 (STHGLSSLCSGLVASILGTP), and 287–310 (SLYKGFLPSWLRMTPWSMVFWLTY).

This sequence belongs to the mitochondrial carrier (TC 2.A.29) family. Homotetramer.

It localises to the mitochondrion inner membrane. The protein resides in the cell projection. The protein localises to the neuron projection. The catalysed reaction is H(+)(in) = H(+)(out). The enzyme catalyses chloride(in) = chloride(out). In terms of biological role, facilitates proton transport across the inner mitochondrial membrane and may dissipate excessive proton gradient associated with oxidative and metabolic stress at neuronal synapses. Regulates glutamate-induced proton conductance in astrocytes, shifting the energy metabolism toward aerobic glycolysis and lactate transfer to neurons for ATP synthesis. Can transport chloride ions with lower efficiency. The transport mechanism remains to be elucidated. The polypeptide is Mitochondrial uncoupling protein 4 (Mus musculus (Mouse)).